A 139-amino-acid chain; its full sequence is Cystatin cpi-1 (139 aa).

A signal peptide spans 1-19; sequence MRFILLIALVFAVLDGINC. Asn29 is a glycosylation site (N-linked (GlcNAc...) asparagine). The Secondary area of contact motif lies at 65-69; the sequence is QVVAG. The cysteines at positions 83 and 99 are disulfide-linked.

This sequence belongs to the cystatin family.

Cysteine protease inhibitor which inhibits members of the peptidase C1 family. Does not inhibit asparaginyl endopeptidase. May play a protective role against exogenous cysteine proteases derived from soil bacteria or fungi, or rotting fruits and vegetation. The sequence is that of Cystatin cpi-1 from Caenorhabditis elegans.